A 464-amino-acid chain; its full sequence is Cystathionine beta-lyase, chloroplastic (464 aa).

The N-terminal 55 residues, 1 to 55 (MTSSLSLHSSFVPSFADLSDRGLISKNSPTSVSISKVPTWEKKQISNRNSFKLNC), are a transit peptide targeting the chloroplast. 6 residues coordinate pyridoxal 5'-phosphate: Tyr-127, Arg-129, Gly-157, Met-158, Ser-275, and Thr-277. An N6-(pyridoxal phosphate)lysine modification is found at Lys-278.

This sequence belongs to the trans-sulfuration enzymes family. As to quaternary structure, forms homodimers. May form homotetramers from two homodimers. It depends on pyridoxal 5'-phosphate as a cofactor.

It is found in the plastid. Its subcellular location is the chloroplast. It catalyses the reaction L,L-cystathionine + H2O = L-homocysteine + pyruvate + NH4(+). It carries out the reaction an S-substituted L-cysteine + H2O = a thiol + pyruvate + NH4(+). The protein operates within amino-acid biosynthesis; L-methionine biosynthesis via de novo pathway; L-homocysteine from L-cystathionine: step 1/1. In terms of biological role, catalyzes the penultimate step in the de novo biosynthesis of methionine. Its role in methionine metabolism may affect plant development in different organs, probably by modifying plant auxin transport. Its cysteine desulfhydrase activity may be involved in hydrogen sulfur production using L-cysteine as a substrate. This is Cystathionine beta-lyase, chloroplastic from Arabidopsis thaliana (Mouse-ear cress).